The primary structure comprises 153 residues: MAAETASGYIQHHLQNLTYGQLPDGSWGFAHSAAEAKAMGFWAFHLDTLGWSVALGLIFLLIFRMAAKKATSGQPGGLQNFVEVMVDFVNGSVKDSFHGRSPVIAPLALTIFVWVFLMNAVDLIPVDWIPQLAILISGDPHIPFRAVSTTDPN.

A run of 2 helical transmembrane segments spans residues 43–63 (AFHL…LLIF) and 104–124 (IAPL…VDLI).

The protein belongs to the ATPase A chain family. F-type ATPases have 2 components, CF(1) - the catalytic core - and CF(0) - the membrane proton channel. CF(1) has five subunits: alpha(3), beta(3), gamma(1), delta(1), epsilon(1). CF(0) has three main subunits: a(1), b(2) and c(9-12). The alpha and beta chains form an alternating ring which encloses part of the gamma chain. CF(1) is attached to CF(0) by a central stalk formed by the gamma and epsilon chains, while a peripheral stalk is formed by the delta and b chains.

The protein resides in the cell inner membrane. In terms of biological role, key component of the proton channel; it plays a direct role in the translocation of protons across the membrane. The sequence is that of ATP synthase subunit a (atpB) from Pseudomonas putida (Arthrobacter siderocapsulatus).